We begin with the raw amino-acid sequence, 325 residues long: Cytochrome f (325 aa).

The signal sequence occupies residues 1–40; sequence MKTPELMAIWQRLKTACLVAIATFGLFFASDVLFPQAAAA. Residues Tyr-41, Cys-62, Cys-65, and His-66 each coordinate heme. The helical transmembrane segment at 290–309 threads the bilayer; that stretch reads IYGYMAFVAGIMLTQIFLVL.

The protein belongs to the cytochrome f family. As to quaternary structure, the 4 large subunits of the cytochrome b6-f complex are cytochrome b6, subunit IV (17 kDa polypeptide, PetD), cytochrome f and the Rieske protein, while the 4 small subunits are PetG, PetL, PetM and PetN. The complex functions as a dimer. It depends on heme as a cofactor.

It localises to the cellular thylakoid membrane. In terms of biological role, component of the cytochrome b6-f complex, which mediates electron transfer between photosystem II (PSII) and photosystem I (PSI), cyclic electron flow around PSI, and state transitions. In Picosynechococcus sp. (strain ATCC 27264 / PCC 7002 / PR-6) (Agmenellum quadruplicatum), this protein is Cytochrome f (petA).